The chain runs to 367 residues: UDP-N-acetylglucosamine--N-acetylmuramyl-(pentapeptide) pyrophosphoryl-undecaprenol N-acetylglucosamine transferase (367 aa).

UDP-N-acetyl-alpha-D-glucosamine contacts are provided by residues threonine 15–glycine 17, asparagine 127, arginine 163, serine 191, isoleucine 249, and glutamine 294.

It belongs to the glycosyltransferase 28 family. MurG subfamily.

The protein resides in the cell inner membrane. It catalyses the reaction di-trans,octa-cis-undecaprenyl diphospho-N-acetyl-alpha-D-muramoyl-L-alanyl-D-glutamyl-meso-2,6-diaminopimeloyl-D-alanyl-D-alanine + UDP-N-acetyl-alpha-D-glucosamine = di-trans,octa-cis-undecaprenyl diphospho-[N-acetyl-alpha-D-glucosaminyl-(1-&gt;4)]-N-acetyl-alpha-D-muramoyl-L-alanyl-D-glutamyl-meso-2,6-diaminopimeloyl-D-alanyl-D-alanine + UDP + H(+). The protein operates within cell wall biogenesis; peptidoglycan biosynthesis. Cell wall formation. Catalyzes the transfer of a GlcNAc subunit on undecaprenyl-pyrophosphoryl-MurNAc-pentapeptide (lipid intermediate I) to form undecaprenyl-pyrophosphoryl-MurNAc-(pentapeptide)GlcNAc (lipid intermediate II). In Burkholderia ambifaria (strain MC40-6), this protein is UDP-N-acetylglucosamine--N-acetylmuramyl-(pentapeptide) pyrophosphoryl-undecaprenol N-acetylglucosamine transferase.